We begin with the raw amino-acid sequence, 278 residues long: Probable velvet family sexual development regulator SCHCODRAFT_28806 (278 aa).

One can recognise a Velvet domain in the interval 51–255 (GRTIRASLDE…ARVGVRLSVR (205 aa)). The segment at 257–278 (TGKKATTKRRKRSDSFDEDDSS) is disordered.

This sequence belongs to the velvet family.

It is found in the nucleus. Its function is as follows. Velvet-domain-containing protein that probably acts as a positive regulator of sexual development. This Schizophyllum commune (strain H4-8 / FGSC 9210) (Split gill fungus) protein is Probable velvet family sexual development regulator SCHCODRAFT_28806.